We begin with the raw amino-acid sequence, 694 residues long: Elongation factor G (694 aa).

The 280-residue stretch at 8-287 (EDYRNFGIMA…AVVSYLPSPI (280 aa)) folds into the tr-type G domain. Residues 17 to 24 (AHIDAGKT), 86 to 90 (DTPGH), and 140 to 143 (NKMD) contribute to the GTP site.

This sequence belongs to the TRAFAC class translation factor GTPase superfamily. Classic translation factor GTPase family. EF-G/EF-2 subfamily.

Its subcellular location is the cytoplasm. Catalyzes the GTP-dependent ribosomal translocation step during translation elongation. During this step, the ribosome changes from the pre-translocational (PRE) to the post-translocational (POST) state as the newly formed A-site-bound peptidyl-tRNA and P-site-bound deacylated tRNA move to the P and E sites, respectively. Catalyzes the coordinated movement of the two tRNA molecules, the mRNA and conformational changes in the ribosome. The chain is Elongation factor G from Bartonella tribocorum (strain CIP 105476 / IBS 506).